A 78-amino-acid chain; its full sequence is U-scoloptoxin(15)-Ssm2a (78 aa).

The N-terminal stretch at 1–23 (MEKKIIFLCFFVSLLTLPEFISS) is a signal peptide. Residues 34 to 37 (PEKK) form an important for inhibition of KCNQ4 region. 2 disulfide bridges follow: Cys-44-Cys-70 and Cys-48-Cys-72.

It belongs to the SLPTX(15) family. In terms of tissue distribution, expressed by the venom gland.

The protein resides in the secreted. This chain is U-scoloptoxin(15)-Ssm2a, found in Scolopendra mutilans (Chinese red-headed centipede).